A 192-amino-acid polypeptide reads, in one-letter code: MKNKVVVVTGVPGVGSTTSSQLAMDNLRKEGVNYKMVSFGSVMFEVAKEENLVSDRDQMRKMDPETQKRIQKMAGRKIAEMAKESPVAVDTHSTVSTPKGYLPGLPSWVLNELNPDLIIVVETTGDEILMRRMSDETRVRDLDTASTIEQHQFMNRCAAMSYGVLTGATVKIVQNRNGLLDQAVEELTNVLR.

10 to 18 (GVPGVGSTT) serves as a coordination point for ATP.

It belongs to the archaeal adenylate kinase family. In terms of assembly, monomer.

The protein localises to the cytoplasm. The catalysed reaction is AMP + ATP = 2 ADP. This is Adenylate kinase (adkA) from Methanococcus voltae.